The sequence spans 361 residues: Putative F-box protein At3g25460 (361 aa).

The F-box domain maps to 1–45 (MMMPELPEDLLVEILCRVPATSLKRLRSTCKLWNHLYNDKRFKSK).

The protein is Putative F-box protein At3g25460 of Arabidopsis thaliana (Mouse-ear cress).